The sequence spans 273 residues: Rho GTPase-activating protein gacB (273 aa).

The Rho-GAP domain maps to Met1–Phe192.

The protein resides in the cytoplasm. Rho GTPase-activating protein involved in the signal transduction pathway. The sequence is that of Rho GTPase-activating protein gacB (gacB) from Dictyostelium discoideum (Social amoeba).